Here is a 200-residue protein sequence, read N- to C-terminus: Major capsid protein (200 aa).

Disordered regions lie at residues 1–25 (MNSVGRRGPRRANQNGTRRRRRRTV) and 33–52 (PNRAGPRRRNGRRKGRGGAN). Over residues 37–48 (GPRRRNGRRKGR) the composition is skewed to basic residues.

This sequence belongs to the luteoviruses capsid protein family.

It is found in the virion. Major capsid protein. This chain is Major capsid protein, found in Avena byzantina (Oat).